The following is a 289-amino-acid chain: G1/S-specific cyclin-D2 (289 aa).

In terms of domain architecture, Cyclin N-terminal spans 26 to 151; it reads LQNLLTIEER…VLGKLKWNLA (126 aa). Residues 264-289 form a disordered region; it reads QHNAGSKSVEDPDQATTPTDVRDVDL. Serine 271 carries the phosphoserine modification. Threonine 280 carries the post-translational modification Phosphothreonine.

This sequence belongs to the cyclin family. Cyclin D subfamily. Interacts with either CDK4 or CDK6 protein kinase to form a serine/threonine kinase holoenzyme complex. The cyclin subunit imparts substrate specificity to the complex. Phosphorylation at Thr-280 by MAP kinases is required for ubiquitination and degradation by the DCX(AMBRA1) complex. In terms of processing, ubiquitinated by the DCX(AMBRA1) complex during the transition from G1 to S cell phase, leading to its degradation: ubiquitination is dependent on Thr-280 phosphorylation. The DCX(AMBRA1) complex represents the major regulator of CCND2 stability during the G1/S transition. Polyubiquitinated by the SCF(FBXL2) complex, leading to proteasomal degradation.

It is found in the nucleus. The protein localises to the cytoplasm. It localises to the nucleus membrane. In terms of biological role, regulatory component of the cyclin D2-CDK4 (DC) complex that phosphorylates and inhibits members of the retinoblastoma (RB) protein family including RB1 and regulates the cell-cycle during G(1)/S transition. Phosphorylation of RB1 allows dissociation of the transcription factor E2F from the RB/E2F complex and the subsequent transcription of E2F target genes which are responsible for the progression through the G(1) phase. Hypophosphorylates RB1 in early G(1) phase. Cyclin D-CDK4 complexes are major integrators of various mitogenenic and antimitogenic signals. This chain is G1/S-specific cyclin-D2, found in Mus musculus (Mouse).